Reading from the N-terminus, the 303-residue chain is Ribonuclease HIII (303 aa).

One can recognise an RNase H type-2 domain in the interval 89–303 (WSVLGSDEVG…ANTKKAERLL (215 aa)). Residues aspartate 95, glutamate 96, and aspartate 199 each coordinate a divalent metal cation.

Belongs to the RNase HII family. RnhC subfamily. Mn(2+) serves as cofactor. Mg(2+) is required as a cofactor.

It localises to the cytoplasm. The enzyme catalyses Endonucleolytic cleavage to 5'-phosphomonoester.. Its function is as follows. Endonuclease that specifically degrades the RNA of RNA-DNA hybrids. This is Ribonuclease HIII from Leuconostoc mesenteroides subsp. mesenteroides (strain ATCC 8293 / DSM 20343 / BCRC 11652 / CCM 1803 / JCM 6124 / NCDO 523 / NBRC 100496 / NCIMB 8023 / NCTC 12954 / NRRL B-1118 / 37Y).